The primary structure comprises 334 residues: YbbR-like domain-containing protein BB_0009 (334 aa).

The chain crosses the membrane as a helical span at residues 22-38 (AISILIAILMFVAFNFN). 2 consecutive YbbR-like domains span residues 43–128 (ITTE…NVLL) and 138–220 (VKIE…VVNI).

It is found in the membrane. This Borreliella burgdorferi (strain ATCC 35210 / DSM 4680 / CIP 102532 / B31) (Borrelia burgdorferi) protein is YbbR-like domain-containing protein BB_0009.